A 222-amino-acid polypeptide reads, in one-letter code: Probable fimbrial chaperone EcpB (222 aa).

The first 20 residues, 1–20 (MKKHLLPLALLFSGISPAQA), serve as a signal peptide directing secretion.

The protein belongs to the EcpB/EcpE family.

Its function is as follows. Part of the ecpRABCDE operon, which encodes the E.coli common pilus (ECP). ECP is found in both commensal and pathogenic strains and plays a dual role in early-stage biofilm development and host cell recognition. This is Probable fimbrial chaperone EcpB (ecpB) from Escherichia coli (strain K12).